Here is a 430-residue protein sequence, read N- to C-terminus: uncharacterized protein (430 aa).

A run of 10 helical transmembrane segments spans residues 13–33 (FFAALASQMGTTVGNMAFAFF), 47–67 (LAELMYSLPTIFVFLIVGVVA), 88–108 (VVLFFTLFTGNIPLVFCILFI), 138–158 (GLNQMLFSIFMVFGVGIGAFM), 228–248 (LIFGFFIFGFVNGGFAVLPMF), 264–284 (SVFTIALGFGLLAGSVIGTLI), 296–316 (IPIFIAGLLIFVLGYTNILWV), 319–339 (AAAFALGMCIGPINIAIGGWM), 358–378 (FMMFAQSLTLGLVALLFPKFV), and 383–403 (YLYYGMGVIILLVFIFYFIAL).

It belongs to the major facilitator superfamily.

Its subcellular location is the cell membrane. This is an uncharacterized protein from Bacillus subtilis (strain 168).